Here is a 292-residue protein sequence, read N- to C-terminus: tRNA pseudouridine synthase B (292 aa).

The active-site Nucleophile is D38.

This sequence belongs to the pseudouridine synthase TruB family. Type 1 subfamily.

The catalysed reaction is uridine(55) in tRNA = pseudouridine(55) in tRNA. Responsible for synthesis of pseudouridine from uracil-55 in the psi GC loop of transfer RNAs. The sequence is that of tRNA pseudouridine synthase B from Gloeobacter violaceus (strain ATCC 29082 / PCC 7421).